The following is a 109-amino-acid chain: Phycoerythrin alpha-1 subunit (109 aa).

Residues Val6, Ala16, Phe17, Pro20, Asp27, Ala28, and Ala39 each contribute to the (2R,3E)-phycocyanobilin site.

Belongs to the phycoerythrin family. As to quaternary structure, heterotetramer of 2 identical alpha chains and 2 identical beta chains which form 2 alpha-beta heterodimers within the heterotetramer. The two alpha-beta heterodimers are rotated to an open configuration in contrast to the closed configuration found in other cryptophyte species due to the insertion of a single amino acid, Asp-65, in a conserved region of the alpha chain. In the open form, the central chromophores are not in physical contact but are separated by a water-filled channel. Contains three phycocyanobilin chromophores with binding mediated by both the alpha and beta subunits.

The protein resides in the plastid. It localises to the chloroplast thylakoid membrane. Functionally, light-harvesting photosynthetic tetrapyrrole chromophore-protein from the phycobiliprotein complex. The polypeptide is Phycoerythrin alpha-1 subunit (Hemiselmis virescens).